The following is a 198-amino-acid chain: Clytin (198 aa).

A propeptide spanning residues 1–9 (MADTASKYA) is cleaved from the precursor. EF-hand domains are found at residues 20 to 55 (KWVN…DICA), 60 to 95 (TPEQ…VDGW), 119 to 148 (EAVF…SGIC), and 149 to 184 (SSDE…FWYT). Ca(2+) is bound by residues D33, N35, D37, K39, and E44. D126, D128, S130, S132, E137, D162, D164, S166, K168, and E173 together coordinate Ca(2+).

Belongs to the aequorin family.

Functionally, ca(2+)-dependent bioluminescence photoprotein. Displays an emission peak at 470 nm (blue light). Trace amounts of calcium ion trigger the intramolecular oxidation of the chromophore, coelenterazine into coelenteramide and CO(2) with the concomitant emission of light. The chain is Clytin from Clytia gregaria (Gregarious jellyfish).